A 274-amino-acid chain; its full sequence is Exosome complex component Rrp42 (274 aa).

It belongs to the RNase PH family. Rrp42 subfamily. As to quaternary structure, component of the archaeal exosome complex. Forms a hexameric ring-like arrangement composed of 3 Rrp41-Rrp42 heterodimers. The hexameric ring associates with a trimer of Rrp4 and/or Csl4 subunits.

The protein resides in the cytoplasm. Functionally, non-catalytic component of the exosome, which is a complex involved in RNA degradation. Contributes to the structuring of the Rrp41 active site. This is Exosome complex component Rrp42 from Pyrococcus abyssi (strain GE5 / Orsay).